A 70-amino-acid chain; its full sequence is ATP synthase subunit epsilon, mitochondrial (70 aa).

The protein belongs to the eukaryotic ATPase epsilon family. As to quaternary structure, F-type ATPases have 2 components, CF(1) - the catalytic core - and CF(0) - the membrane proton channel. CF(1) has five subunits: alpha(3), beta(3), gamma(1), delta(1), epsilon(1). CF(0) has three main subunits: a, b and c.

Its subcellular location is the mitochondrion. The protein localises to the mitochondrion inner membrane. Functionally, mitochondrial membrane ATP synthase (F(1)F(0) ATP synthase or Complex V) produces ATP from ADP in the presence of a proton gradient across the membrane which is generated by electron transport complexes of the respiratory chain. F-type ATPases consist of two structural domains, F(1) - containing the extramembraneous catalytic core, and F(0) - containing the membrane proton channel, linked together by a central stalk and a peripheral stalk. During catalysis, ATP synthesis in the catalytic domain of F(1) is coupled via a rotary mechanism of the central stalk subunits to proton translocation. Part of the complex F(1) domain and of the central stalk which is part of the complex rotary element. Rotation of the central stalk against the surrounding alpha(3)beta(3) subunits leads to hydrolysis of ATP in three separate catalytic sites on the beta subunits. This Ipomoea batatas (Sweet potato) protein is ATP synthase subunit epsilon, mitochondrial.